The sequence spans 487 residues: Adenosylhomocysteinase (487 aa).

Residues threonine 76, aspartate 151, and glutamate 212 each coordinate substrate. Position 213 to 215 (213 to 215 (TTT)) interacts with NAD(+). Substrate is bound by residues lysine 242 and aspartate 246. Residues asparagine 247, 276 to 281 (GYGDVG), glutamate 299, asparagine 334, 355 to 357 (IGH), and asparagine 403 contribute to the NAD(+) site.

The protein belongs to the adenosylhomocysteinase family. It depends on NAD(+) as a cofactor.

The protein localises to the cytoplasm. It catalyses the reaction S-adenosyl-L-homocysteine + H2O = L-homocysteine + adenosine. It participates in amino-acid biosynthesis; L-homocysteine biosynthesis; L-homocysteine from S-adenosyl-L-homocysteine: step 1/1. May play a key role in the regulation of the intracellular concentration of adenosylhomocysteine. The protein is Adenosylhomocysteinase of Bacteroides fragilis (strain YCH46).